The primary structure comprises 616 residues: Dihydroxy-acid dehydratase (616 aa).

Asp81 contacts Mg(2+). Cys122 contacts [2Fe-2S] cluster. Mg(2+) contacts are provided by Asp123 and Lys124. N6-carboxylysine is present on Lys124. Position 195 (Cys195) interacts with [2Fe-2S] cluster. Residue Glu491 coordinates Mg(2+). The Proton acceptor role is filled by Ser517.

This sequence belongs to the IlvD/Edd family. In terms of assembly, homodimer. Requires [2Fe-2S] cluster as cofactor. The cofactor is Mg(2+).

It catalyses the reaction (2R)-2,3-dihydroxy-3-methylbutanoate = 3-methyl-2-oxobutanoate + H2O. The catalysed reaction is (2R,3R)-2,3-dihydroxy-3-methylpentanoate = (S)-3-methyl-2-oxopentanoate + H2O. The protein operates within amino-acid biosynthesis; L-isoleucine biosynthesis; L-isoleucine from 2-oxobutanoate: step 3/4. It participates in amino-acid biosynthesis; L-valine biosynthesis; L-valine from pyruvate: step 3/4. Its function is as follows. Functions in the biosynthesis of branched-chain amino acids. Catalyzes the dehydration of (2R,3R)-2,3-dihydroxy-3-methylpentanoate (2,3-dihydroxy-3-methylvalerate) into 2-oxo-3-methylpentanoate (2-oxo-3-methylvalerate) and of (2R)-2,3-dihydroxy-3-methylbutanoate (2,3-dihydroxyisovalerate) into 2-oxo-3-methylbutanoate (2-oxoisovalerate), the penultimate precursor to L-isoleucine and L-valine, respectively. This Salmonella heidelberg (strain SL476) protein is Dihydroxy-acid dehydratase.